The chain runs to 154 residues: Vimentin (154 aa).

Positions 1 to 13 (MSTRSVSSSSYRR) are enriched in low complexity. The disordered stretch occupies residues 1 to 31 (MSTRSVSSSSYRRMFGGPGTASRPSSTRSYV). Ser2 carries the N-acetylserine modification. The segment at 2–95 (STRSVSSSSY…FSLADAINTE (94 aa)) is head. The residue at position 5 (Ser5) is a Phosphoserine. A Phosphoserine; by PKA and PKC; alternate modification is found at Ser7. Ser7 is a glycosylation site (O-linked (GlcNAc) serine; alternate). At Ser8 the chain carries Phosphoserine. Phosphoserine; by PKC occurs at positions 9 and 10. Phosphothreonine is present on Thr20. The residue at position 25 (Ser25) is a Phosphoserine; by PKA and PKC. Ser26 carries the phosphoserine; by PKC modification. Residue Thr33 is glycosylated (O-linked (GlcNAc) threonine). O-linked (GlcNAc) serine; alternate glycosylation occurs at Ser34. At Ser34 the chain carries Phosphoserine; by PKC; alternate. At Ser39 the chain carries Phosphoserine; by CaMK2, PKA, PKC and ROCK2. Ser42 bears the Phosphoserine; by PKC mark. At Ser49 the chain carries Phosphoserine. Tyr53 bears the Phosphotyrosine mark. Position 55 is a phosphoserine (Ser55). Residue Ser56 is modified to Phosphoserine; by CDK5 and CDK1. Position 61 is a phosphotyrosine (Tyr61). Ser66 carries the phosphoserine; by PKA and PKC modification. At Ser72 the chain carries Phosphoserine; by AURKB and ROCK2. At Ser83 the chain carries Phosphoserine; by CaMK2. Ser87 is modified (phosphoserine). Positions 96–131 (FKNTRTNEKVELQELNDRFANYIDKVRFLEQQNKIL) are coil 1A. Residues 96-131 (FKNTRTNEKVELQELNDRFANYIDKVRFLEQQNKIL) adopt a coiled-coil conformation. The IF rod domain maps to 103–154 (EKVELQELNDRFANYIDKVRFLEQQNKILLAELEQLKGQGKSRLGHLYEEEM). A Glycyl lysine isopeptide (Lys-Gly) (interchain with G-Cter in SUMO2) cross-link involves residue Lys104. The residue at position 117 (Tyr117) is a Phosphotyrosine. 3 positions are modified to N6-acetyllysine; alternate: Lys120, Lys129, and Lys139. Residues Lys120 and Lys129 each carry the N6-succinyllysine; alternate modification. Glycyl lysine isopeptide (Lys-Gly) (interchain with G-Cter in SUMO2); alternate cross-links involve residues Lys120, Lys129, and Lys139. The tract at residues 132–153 (LAELEQLKGQGKSRLGHLYEEE) is linker 1. A Phosphoserine modification is found at Ser144. Met154 is a region of interest (coil 1B).

It belongs to the intermediate filament family. Homomer assembled from elementary dimers. Identified in complexes that contain VIM, EZR, AHNAK, BFSP1, BFSP2, ANK2, PLEC, PRX and spectrin. Interacts with BCAS3. Interacts with LGSN. Interacts with SYNM. Interacts (via rod region) with PLEC (via CH 1 domain). Interacts with STK33. Interacts with LARP6. Interacts with RAB8B. Interacts with TOR1A; the interaction associates TOR1A with the cytoskeleton. Interacts with TOR1AIP1. Interacts with TOR1AIP1. Interacts with DIAPH1. Interacts with EPPK1; interaction is dependent of higher-order structure of intermediate filament. Interacts with the non-receptor tyrosine kinase SRMS; the interaction leads to phosphorylation of VIM. Interacts with NOD2. Interacts (via head region) with CORO1C. Interacts with HDGF. Interacts with PRKCE (via phorbol-ester/DAG-type 2 domain). Interacts with BFSP2. Interacts with PPL. Interacts with PKP1 and PKP2. Interacts with SCRIB (via PDZ domains); the interaction protects SCRIB from proteasomal degradation and facilitates SCRIB localization to intermediate filaments, the interaction is reduced by cell contact inhibition. In terms of processing, one of the most prominent phosphoproteins in various cells of mesenchymal origin. Phosphorylation is enhanced during cell division, at which time vimentin filaments are significantly reorganized. Phosphorylation by PKN1 inhibits the formation of filaments. Filament disassembly during mitosis is promoted by phosphorylation at Ser-55 as well as by nestin. Phosphorylated at Ser-56 by CDK5 during neutrophil secretion in the cytoplasm. Phosphorylated by STK33. Phosphorylated on tyrosine residues by SRMS.

The protein localises to the cytoplasm. Its subcellular location is the cytoskeleton. It localises to the nucleus matrix. The protein resides in the cell membrane. In terms of biological role, vimentins are class-III intermediate filaments found in various non-epithelial cells, especially mesenchymal cells. Vimentin is attached to the nucleus, endoplasmic reticulum, and mitochondria, either laterally or terminally. Plays a role in cell directional movement, orientation, cell sheet organization and Golgi complex polarization at the cell migration front. Protects SCRIB from proteasomal degradation and facilitates its localization to intermediate filaments in a cell contact-mediated manner. Its function is as follows. Involved with LARP6 in the stabilization of type I collagen mRNAs for CO1A1 and CO1A2. The protein is Vimentin (VIM) of Ovis aries (Sheep).